Reading from the N-terminus, the 126-residue chain is Large ribosomal subunit protein uL22 (126 aa).

The protein belongs to the universal ribosomal protein uL22 family. Part of the 50S ribosomal subunit.

In terms of biological role, this protein binds specifically to 23S rRNA; its binding is stimulated by other ribosomal proteins, e.g. L4, L17, and L20. It is important during the early stages of 50S assembly. It makes multiple contacts with different domains of the 23S rRNA in the assembled 50S subunit and ribosome. The globular domain of the protein is located near the polypeptide exit tunnel on the outside of the subunit, while an extended beta-hairpin is found that lines the wall of the exit tunnel in the center of the 70S ribosome. The protein is Large ribosomal subunit protein uL22 of Bradyrhizobium sp. (strain BTAi1 / ATCC BAA-1182).